A 325-amino-acid polypeptide reads, in one-letter code: Ribose-phosphate pyrophosphokinase (325 aa).

ATP contacts are provided by residues 45–47 (NGE) and 104–105 (RQ). Mg(2+) contacts are provided by histidine 138 and aspartate 178. The active site involves lysine 202. D-ribose 5-phosphate contacts are provided by residues arginine 204, aspartate 230, and 234 to 238 (DTGGT).

This sequence belongs to the ribose-phosphate pyrophosphokinase family. Class I subfamily. As to quaternary structure, homohexamer. It depends on Mg(2+) as a cofactor.

It localises to the cytoplasm. It carries out the reaction D-ribose 5-phosphate + ATP = 5-phospho-alpha-D-ribose 1-diphosphate + AMP + H(+). It functions in the pathway metabolic intermediate biosynthesis; 5-phospho-alpha-D-ribose 1-diphosphate biosynthesis; 5-phospho-alpha-D-ribose 1-diphosphate from D-ribose 5-phosphate (route I): step 1/1. Functionally, involved in the biosynthesis of the central metabolite phospho-alpha-D-ribosyl-1-pyrophosphate (PRPP) via the transfer of pyrophosphoryl group from ATP to 1-hydroxyl of ribose-5-phosphate (Rib-5-P). The sequence is that of Ribose-phosphate pyrophosphokinase from Corynebacterium glutamicum (strain ATCC 13032 / DSM 20300 / JCM 1318 / BCRC 11384 / CCUG 27702 / LMG 3730 / NBRC 12168 / NCIMB 10025 / NRRL B-2784 / 534).